The primary structure comprises 354 residues: Selenide, water dikinase (354 aa).

The active site involves Cys-23. ATP-binding positions include Lys-26 and 54 to 56; that span reads TSD. Asp-57 lines the Mg(2+) pocket. Residues Asp-74, Asp-97, and 145 to 147 contribute to the ATP site; that span reads GHS. A Mg(2+)-binding site is contributed by Asp-97. Asp-233 is a binding site for Mg(2+).

Belongs to the selenophosphate synthase 1 family. Class I subfamily. As to quaternary structure, homodimer. The cofactor is Mg(2+).

The enzyme catalyses hydrogenselenide + ATP + H2O = selenophosphate + AMP + phosphate + 2 H(+). In terms of biological role, synthesizes selenophosphate from selenide and ATP. The chain is Selenide, water dikinase from Burkholderia ambifaria (strain MC40-6).